A 371-amino-acid chain; its full sequence is tRNA-specific 2-thiouridylase MnmA (371 aa).

ATP contacts are provided by residues 13 to 20 and methionine 39; that span reads GMSGGVDS. An interaction with target base in tRNA region spans residues 99 to 101; the sequence is NPD. Residue cysteine 104 is the Nucleophile of the active site. A disulfide bridge connects residues cysteine 104 and cysteine 200. Residue glycine 128 coordinates ATP. An interaction with tRNA region spans residues 150–152; it reads KDQ. Cysteine 200 functions as the Cysteine persulfide intermediate in the catalytic mechanism. Residues 308 to 309 form an interaction with tRNA region; the sequence is RY.

The protein belongs to the MnmA/TRMU family.

It is found in the cytoplasm. It carries out the reaction S-sulfanyl-L-cysteinyl-[protein] + uridine(34) in tRNA + AH2 + ATP = 2-thiouridine(34) in tRNA + L-cysteinyl-[protein] + A + AMP + diphosphate + H(+). Its function is as follows. Catalyzes the 2-thiolation of uridine at the wobble position (U34) of tRNA, leading to the formation of s(2)U34. The polypeptide is tRNA-specific 2-thiouridylase MnmA (Geobacillus thermodenitrificans (strain NG80-2)).